Here is a 412-residue protein sequence, read N- to C-terminus: Motilin receptor (412 aa).

At 1–35 the chain is on the extracellular side; the sequence is MGSPWNGSDGPEGAREPPWPALPPCDERRCSPFPL. N6 carries an N-linked (GlcNAc...) asparagine glycan. The helical transmembrane segment at 36 to 56 threads the bilayer; that stretch reads GALVPVTAVCLCLFVVGVSGN. The Cytoplasmic segment spans residues 57–74; it reads VVTVMLIGRYRDMRTTTN. A helical transmembrane segment spans residues 75–94; it reads LYLGSMAVSDLLILLGLPFD. Topologically, residues 95–112 are extracellular; sequence LYRLWRSRPWVFGPLLCR. A disulfide bond links C111 and C235. The chain crosses the membrane as a helical span at residues 113 to 134; that stretch reads LSLYVGEGCTYATLLHMTALSV. Residues 135–157 lie on the Cytoplasmic side of the membrane; the sequence is ERYLAICRPLRARVLVTRRRVRA. The chain crosses the membrane as a helical span at residues 158–178; sequence LIAVLWAVALLSAGPFLFLVG. The Extracellular segment spans residues 179–246; the sequence is VEQDPGISVV…PSPAQLGALR (68 aa). N192 carries N-linked (GlcNAc...) asparagine glycosylation. A helical membrane pass occupies residues 247–270; sequence VMLWVTTAYFFLPFLCLSILYGLI. The Cytoplasmic segment spans residues 271-298; it reads GRELWSSRRPLRGPAASGRERGHRQTVR. A helical transmembrane segment spans residues 299–320; that stretch reads VLLVVVLAFIICWLPFHVGRII. Residues 321–334 lie on the Extracellular side of the membrane; that stretch reads YINTEDSRMMYFSQ. Residues 335–358 form a helical membrane-spanning segment; the sequence is YFNIVALQLFYLSASINPILYNLI. Over 359–412 the chain is Cytoplasmic; the sequence is SKKYRAAAFKLLLARKSRPRGFHRSRDTAGEVAGDTGGDTVGYTETSANVKTMG.

This sequence belongs to the G-protein coupled receptor 1 family. In terms of tissue distribution, expressed only in thyroid, stomach, and bone marrow.

The protein resides in the cell membrane. Receptor for motilin. This Homo sapiens (Human) protein is Motilin receptor (MLNR).